Consider the following 2856-residue polypeptide: Lipopolysaccharide-responsive and beige-like anchor protein (2856 aa).

2 disordered regions span residues 1–35 (MASE…ALSL) and 939–1107 (EQRK…DDDY). The residue at position 2 (Ala-2) is an N-acetylalanine. 3 positions are modified to phosphoserine: Ser-10, Ser-979, and Ser-1003. Residues 991–1009 (ENSSIGRASSIDSASNTEL) show a composition bias toward polar residues. Over residues 1010 to 1026 (QTHDMSSDEKKVERENQ) the composition is skewed to basic and acidic residues. Residues 1073-1082 (SEVSASISSP) are compositionally biased toward low complexity. Phosphoserine occurs at positions 1097, 1132, 1136, 1219, 1221, 1228, 1244, and 1258. The tract at residues 1253–1296 (FELKASTSTEAPQPQRHGLEISRQQEQTAQGTAPDAVDQQRRDS) is disordered. Positions 1274–1283 (SRQQEQTAQG) are enriched in polar residues. Residues 1298–1340 (STMFRIPEFKWSQMHQRLLTDLLFSIETDIQMWRSHSTKTVMD) form a WD 1 repeat. Phosphoserine occurs at positions 1487 and 1497. Residues 1529 to 1545 (AQFLALAVVYFISVLMV) form a helical membrane-spanning segment. Disordered stretches follow at residues 1556 to 1621 (DERH…LGSG) and 1750 to 1778 (SAVS…SPKC). Positions 1563 to 1573 (LKETSSDNGNA) are enriched in polar residues. The span at 1586–1601 (SSLTLSSVEESLEGTS) shows a compositional bias: low complexity. Residues Ser-1608, Ser-1770, Ser-1773, and Ser-2057 each carry the phosphoserine modification. The 109-residue stretch at 2066–2174 (NLAGPVSLST…TVKKVVNYLP (109 aa)) folds into the BEACH-type PH domain. One can recognise a BEACH domain in the interval 2193–2482 (ATPRQLFKAS…QLLIEPHPPR (290 aa)). A Phosphoserine modification is found at Ser-2489. 5 WD repeats span residues 2584–2626 (DQSI…LIQV), 2629–2672 (GHWD…SGIG), 2688–2728 (GHDY…RTLE), 2770–2809 (ETDD…QLFA), and 2812–2851 (GCDA…WHHE).

As to quaternary structure, interacts with TOM1 and TOLLIP. In terms of tissue distribution, isoform 1 is expressed in the brain, is absent from the lung and the bone marrow and is less abundant in the spleen. Isoform 2 is expressed in the spleen, lung, brain and bone marrow. Isoform 3 is expressed in the brain, is absent from the bone marrow and is less abundant in the spleen and lung.

It is found in the cell membrane. The protein localises to the endoplasmic reticulum membrane. The protein resides in the golgi apparatus. Its subcellular location is the trans-Golgi network membrane. It localises to the lysosome membrane. Involved in coupling signal transduction and vesicle trafficking to enable polarized secretion and/or membrane deposition of immune effector molecules. Involved in phagophore growth during mitophagy by regulating ATG9A trafficking to mitochondria. The polypeptide is Lipopolysaccharide-responsive and beige-like anchor protein (Lrba) (Mus musculus (Mouse)).